Here is a 392-residue protein sequence, read N- to C-terminus: MLAPCSGWELGCFRLCLRQVRLWAGAGRWACWACQARPYSSGGSERWPGSETEVPPPGPGRRTLKEWTLQVSPFGRLRARLPCHLAVRPLDPLTYPDGDRVLVAVCGVEGGVRGLDGLQVKYDEDLEEMAIVSDTIHPQASVEVNAPLKFGLDIKSSGSGCVKVQSIEGDNCKIETEHGTSILQSVKGQKLHVQTKGGKVICLGTVYGNIDIHASDKSAVTIDKLQGSSVTVSTEDGLLKAKYLYTESSFLSSAAGDITLGSVHGNITLQSKMGNITVDSSSGCLKASTNQGAIDVYVSQLGKVELKSHKGSIIVKVPSSLQAHLQLSGKEVDVNSEVHVQEMAEVRKDDVVTVTGLMNQASKREKWIKADAPKGTVSFRRQSWFQSLKLQD.

The disordered stretch occupies residues 39–60 (YSSGGSERWPGSETEVPPPGPG).

The protein is Protein FAM185A (FAM185A) of Homo sapiens (Human).